The primary structure comprises 208 residues: Ras-related protein Rab6 (208 aa).

Residue 19–27 coordinates GTP; sequence GEQSVGKTS. The Effector region signature appears at 41–49; it reads YQATIGIDF. Residues 67-71, 125-128, and 155-157 each bind GTP; these read DTAGQ, NKTD, and SAK. The disordered stretch occupies residues 176–208; sequence MDSTENKPSEDMQEVVLKDSPNETKDPEGGCAC. Positions 179-208 are enriched in basic and acidic residues; the sequence is TENKPSEDMQEVVLKDSPNETKDPEGGCAC.

This sequence belongs to the small GTPase superfamily. Rab family. Interacts with Rich and Act5C. Interacts with BicD (via C-terminal domain). Interacts (in GTP-bound) with GCC1/CG10703 and cbs. Interacts with Gorab (via C-terminus); binds to a Gorab homodimer, this interaction seems to be required for trans-Golgi localization of Gorab. In terms of tissue distribution, expressed in larval eye, wing and leg imaginal disks and in salivary gland. Expressed in the larval optic lobe, showing an enrichment in the neuropil. In the adult brain, expressed in photoreceptors and mushroom body.

Its subcellular location is the golgi apparatus membrane. The protein resides in the synapse. It localises to the perikaryon. In terms of biological role, protein transport. Regulator of membrane traffic from the Golgi apparatus towards the endoplasmic reticulum (ER). Mediates membrane trafficking during egg chamber growth and organization, possibly upstream of exocyst component Sec5. Also during oogenesis, plays a role, together with BicD but independently of Sec5, in the polarization of the oocyte microtubule cytoskeleton, in the localization of oskar mRNA and in the anterodorsal secretion of grk. Required for anterograde opsin transport through the ER-Golgi complex. Plays a role, together with Rich, in regulating CadN transport in photoreceptor cells which is required for the formation of normal synaptic connections between axons from the inner photoreceptor cells in the eye and postsynaptic cells in the brain medulla layer M6. Necessary for proper development of bristle shafts of macrochaete and microchaete on the head, thorax and scutellum. Modulates Notch signaling. As a key regulator of vesicular traffic, plays a critical role in the regulation of actin organization and is required for normal rates of phagocytic uptake during phagocytosis involved in defense against viral and fungal infection. The polypeptide is Ras-related protein Rab6 (Drosophila melanogaster (Fruit fly)).